A 109-amino-acid polypeptide reads, in one-letter code: Membrane-bound lysozyme inhibitor of C-type lysozyme (109 aa).

An N-terminal signal peptide occupies residues 1–17 (MTMKKLLIIILPVLLSG). Cys-18 carries N-palmitoyl cysteine lipidation. A lipid anchor (S-diacylglycerol cysteine) is attached at Cys-18. Cysteines 37 and 102 form a disulfide.

Belongs to the MliC family. Type 1 subfamily. As to quaternary structure, monomer.

It is found in the cell outer membrane. In terms of biological role, specifically inhibits C-type lysozymes. In Escherichia coli (strain K12), this protein is Membrane-bound lysozyme inhibitor of C-type lysozyme.